The following is a 147-amino-acid chain: MKVEEKVKELLLPILEERDFKLVDIEFIPSKRPILRIYIYNPEGTSIDDCEWVSKRIGALLDVEDLIDKAYILEVSSPGLDRKFKNIEEYDIFKGRDVVVKTKEPINEKKVFKGTLLGLEDEKVKIKENEETVEIPFENVSQTKLDF.

Belongs to the RimP family.

The protein localises to the cytoplasm. Its function is as follows. Required for maturation of 30S ribosomal subunits. The protein is Ribosome maturation factor RimP of Sulfurihydrogenibium sp. (strain YO3AOP1).